The primary structure comprises 235 residues: Thrombin-like enzyme bilineobin (235 aa).

Positions 1-227 constitute a Peptidase S1 domain; it reads IIGGDECNIN…HLDWIQSIIA (227 aa). 6 disulfides stabilise this stretch: Cys7–Cys141, Cys28–Cys44, Cys78–Cys234, Cys120–Cys188, Cys152–Cys167, and Cys178–Cys203. Residue His43 is the Charge relay system of the active site. N-linked (GlcNAc...) asparagine glycosylation is found at Asn45, Asn57, and Asn81. Asp88 (charge relay system) is an active-site residue. N-linked (GlcNAc...) asparagine glycosylation is found at Asn132 and Asn148. The active-site Charge relay system is Ser182. Asn229 is a glycosylation site (N-linked (GlcNAc...) asparagine).

This sequence belongs to the peptidase S1 family. Snake venom subfamily. In terms of assembly, monomer. Glycosylated. In terms of tissue distribution, expressed by the venom gland.

It is found in the secreted. Not inhibited by hirudin. Functionally, thrombin-like snake venom serine protease that has coagulant activity by releasing fibrinopeptides A and B from fibrinogen alpha (FGA) and beta (FGB), with a preference for beta chain. This chain is Thrombin-like enzyme bilineobin, found in Agkistrodon bilineatus (Cantil).